The chain runs to 210 residues: Large ribosomal subunit protein uL3 (210 aa).

Belongs to the universal ribosomal protein uL3 family. In terms of assembly, part of the 50S ribosomal subunit. Forms a cluster with proteins L14 and L19.

Its function is as follows. One of the primary rRNA binding proteins, it binds directly near the 3'-end of the 23S rRNA, where it nucleates assembly of the 50S subunit. The protein is Large ribosomal subunit protein uL3 of Syntrophotalea carbinolica (strain DSM 2380 / NBRC 103641 / GraBd1) (Pelobacter carbinolicus).